Reading from the N-terminus, the 407-residue chain is Venom metalloproteinase 3 (407 aa).

N-linked (GlcNAc...) asparagine glycans are attached at residues asparagine 42, asparagine 91, asparagine 126, and asparagine 166. One can recognise a Peptidase M12B domain in the interval 191–405 (FYPKLLVLVD…TSAACLKDTY (215 aa)). 2 cysteine pairs are disulfide-bonded: cysteine 317/cysteine 400 and cysteine 356/cysteine 384. Histidine 340 provides a ligand contact to Zn(2+). The active site involves glutamate 341. Residues histidine 344 and histidine 350 each contribute to the Zn(2+) site. Asparagine 391 carries an N-linked (GlcNAc...) asparagine glycan.

The protein in the C-terminal section; belongs to the venom metalloproteinase (M12B) family. Monomer. Requires Zn(2+) as cofactor. In terms of tissue distribution, expressed by the venom gland.

The protein resides in the secreted. Its activity is regulated as follows. The gelatinase activity is inhibited by EDTA. Its function is as follows. The recombinant protein has gelatinase activity. In vivo, injection of this recombinant into fifth instar L.oleracea (host) larvae results in partial insect mortality associated with the molt to sixth instar, with surviving insects showing retarded development and growth. This is Venom metalloproteinase 3 from Eulophus pennicornis (Parasitoid wasp).